The primary structure comprises 346 residues: Protein RecA (346 aa).

G65 to T72 provides a ligand contact to ATP.

Belongs to the RecA family.

It localises to the cytoplasm. Can catalyze the hydrolysis of ATP in the presence of single-stranded DNA, the ATP-dependent uptake of single-stranded DNA by duplex DNA, and the ATP-dependent hybridization of homologous single-stranded DNAs. It interacts with LexA causing its activation and leading to its autocatalytic cleavage. This chain is Protein RecA, found in Enterococcus mundtii.